The primary structure comprises 390 residues: Methionyl-tRNA formyltransferase, mitochondrial (390 aa).

A mitochondrion-targeting transit peptide spans 1-33 (MRVLLRCCCGHLPVGGGAGRRSNPRWRALARLS).

This sequence belongs to the Fmt family.

It is found in the mitochondrion. It carries out the reaction L-methionyl-tRNA(fMet) + (6R)-10-formyltetrahydrofolate = N-formyl-L-methionyl-tRNA(fMet) + (6S)-5,6,7,8-tetrahydrofolate + H(+). Its function is as follows. Methionyl-tRNA formyltransferase that formylates methionyl-tRNA in mitochondria and is crucial for translation initiation. This Bos taurus (Bovine) protein is Methionyl-tRNA formyltransferase, mitochondrial (MTFMT).